A 134-amino-acid chain; its full sequence is MGFLTAVTQGLVRGADRMSKWTSKRGPRTFTKSRGAKKTGFYTNRKFVQIKEMVPEFVVPDLTGFKLKPYVNYRAPAGIDTPLTAKALFLETVAPAIEKDFKEGTFDANNLEKYGFEPTQEGKLFQLYPKNFPR.

A mitochondrion-targeting transit peptide spans 1–13 (MGFLTAVTQGLVR).

The protein belongs to the mitochondrion-specific ribosomal protein mL41 family. In terms of assembly, component of the mitochondrial ribosome large subunit (39S) which comprises a 16S rRNA and about 50 distinct proteins. Interacts with BCL2. Was also identified in the 28S mitochondrial ribosome.

The protein localises to the mitochondrion. Functionally, component of the mitochondrial ribosome large subunit. Also involved in apoptosis and cell cycle. Enhances p53/TP53 stability, thereby contributing to p53/TP53-induced apoptosis in response to growth-inhibitory condition. Enhances p53/TP53 translocation to the mitochondria. Has the ability to arrest the cell cycle at the G1 phase, possibly by stabilizing the CDKN1A and CDKN1B (p27Kip1) proteins. The chain is Large ribosomal subunit protein mL41 (Mrpl41) from Rattus norvegicus (Rat).